Reading from the N-terminus, the 321-residue chain is PI-PLC X domain-containing protein 3 (321 aa).

The 176-residue stretch at 22-197 (SIHSIPLTNL…DYQVLVFYHS (176 aa)) folds into the PI-PLC X-box domain. Residues His37 and His114 contribute to the active site.

Widely expressed, with highest levels in brain, followed by heart atrium. Not detected in small intestine, nor stomach.

It is found in the cytoplasm. This is PI-PLC X domain-containing protein 3 (Plcxd3) from Mus musculus (Mouse).